A 2006-amino-acid polypeptide reads, in one-letter code: E3 ubiquitin-protein ligase PRT6 (2006 aa).

Residues G119–G189 form a UBR-type zinc finger. Disordered regions lie at residues L1167 to V1186 and D1338 to D1380. The span at D1338–S1348 shows a compositional bias: basic and acidic residues. A compositionally biased stretch (polar residues) spans E1349–Q1360. Residues P1364–A1377 show a composition bias toward basic and acidic residues. An RING-type; degenerate zinc finger spans residues C1395–R1440.

This sequence belongs to the E3 ubiquitin-protein ligase UBR1-like family.

It catalyses the reaction S-ubiquitinyl-[E2 ubiquitin-conjugating enzyme]-L-cysteine + [acceptor protein]-L-lysine = [E2 ubiquitin-conjugating enzyme]-L-cysteine + N(6)-ubiquitinyl-[acceptor protein]-L-lysine.. It participates in protein modification; protein ubiquitination. Its function is as follows. Ubiquitin protein ligase which is a component of the N-end rule pathway with arginine specificity, and functions with the arginyltransferases ATE1 and ATE2. Recognizes and binds to proteins bearing specific N-terminal residues that are destabilizing according to the N-end rule, leading to their ubiquitination and subsequent degradation. Does not participate in degradation of proteins with N-terminal Phe or Leu. The N-end rule pathway regulates seed after-ripening, seedling sugar sensitivity, seedling lipid breakdown, and abscisic acid (ABA) sensitivity of germination. The N-end rule pathway regulates various aspects of leaf and shoot development. Involved in the ubiquitination and subsequent degradation of RAP2-12, an activator of hypoxic gene expression. The ubiquitination occurs after the N-arginylation of RAP2-12 by ATE1 or ATE2 under aerobic conditions. The end-rule pathway plays a role in regulating the timing and amplitude of the immune response following infection with the bacterial pathogen Pseudomonas syringae pv tomato. Regulates the biosynthesis of plant-defense metabolites such as glucosinolates, and the biosynthesis and response to the phytohormone jasmonate (JA), which plays a key role in plant immunity. Controls the expression of specific defense-response genes, activates the synthesis pathway for the phytoalexin camalexin, and influences basal resistance to the hemibiotroph pathogen Pseudomonas syringae pv tomato. Coordinates the mobilization of seed storage reserves and regulates the abundance and activities of several proteases following seed germination. In Arabidopsis thaliana (Mouse-ear cress), this protein is E3 ubiquitin-protein ligase PRT6.